The chain runs to 503 residues: Ell-associated factor Eaf (503 aa).

Polar residues-rich tracts occupy residues 143–158 (PGQQ…TNVA) and 170–189 (ENST…SRRN). Disordered regions lie at residues 143 to 223 (PGQQ…PAWD) and 251 to 503 (NGSQ…EDDD). S199 carries the post-translational modification Phosphoserine. The span at 251 to 264 (NGSQANTSGSSTGS) shows a compositional bias: polar residues. The span at 281–296 (GKQRQAPHHGHAKRQQ) shows a compositional bias: basic residues. Residues 297–311 (RSSPPMVQQQPNFGR) show a composition bias toward polar residues. Positions 312–326 (NSYNGGNNYAQQQQH) are enriched in low complexity. Residues 382 to 397 (DSSDSDSGSDSDDSTE) show a composition bias toward acidic residues. Low complexity-rich tracts occupy residues 415 to 435 (MHHQ…QQQH) and 484 to 497 (NDLL…SSNS).

This sequence belongs to the EAF family.

It localises to the nucleus. Its function is as follows. Promotes transcriptional elongation by Su(Tpl)/ELL. Essential for development. The polypeptide is Ell-associated factor Eaf (Drosophila ananassae (Fruit fly)).